The chain runs to 115 residues: Thioredoxin-1 (115 aa).

Residues 2–114 (LKRCNFKNQV…RQKVLEHVSA (113 aa)) enclose the Thioredoxin domain. Catalysis depends on nucleophile residues cysteine 39 and cysteine 42. Cysteines 39 and 42 form a disulfide.

It belongs to the thioredoxin family. In terms of tissue distribution, expressed in ASJ and ASI ciliated sensory neurons. Expressed in the intestine (at protein level).

Functionally, participates in various redox reactions through the reversible oxidation of its active center dithiol to a disulfide and catalyzes dithiol-disulfide exchange reactions. Shown to facilitate the reduction of insulin disulfide bonds. Might play a role in the reversible nitrosylation of cysteine residues in target proteins, and thereby contributing to the response to intracellular nitric oxide. Shapes the ASJ sensory neuron biphasic response to nitric oxide (NO) exposure; trans-nitrosylation activity might inhibit calcium flux to the cytoplasm in ASJ neurons when exposed to a NO stimulus, whereas de-nitrosylation activity might promote calcium flux when NO is diminished. By regulating the NO-induced ASJ sensory neuron activity, mediates the avoidance response to NO-producing organisms like P.aeruginosa. Positively regulates life span extension under normal and caloric restriction conditions, dauer formation and the oxidative stress response. Contributes to the down-regulation of expression of the insulin-like neuropeptide daf-28 in the ASJ neurons in a redox-independent fashion, thereby promoting dauer formation. Negatively regulates the nuclear localization of the intestinal skn-1 transcription factor in a p38 MAPK pathway-dependent and redox-independent fashion. The sequence is that of Thioredoxin-1 (trx-1) from Caenorhabditis elegans.